The sequence spans 93 residues: Large ribosomal subunit protein eL43 (93 aa).

The C4-type zinc-finger motif lies at 39 to 60 (CEFCGKYGVKRKAVGIWGCKDC).

Belongs to the eukaryotic ribosomal protein eL43 family.

This Brassica rapa subsp. rapa (Turnip) protein is Large ribosomal subunit protein eL43 (RPL37A).